The chain runs to 610 residues: Elongation factor 4 (610 aa).

Positions 13 to 195 constitute a tr-type G domain; the sequence is SHIRNFSIVA…AIVNRLPAPK (183 aa). Residues 25–30 and 142–145 contribute to the GTP site; these read DHGKST and NKID.

It belongs to the TRAFAC class translation factor GTPase superfamily. Classic translation factor GTPase family. LepA subfamily.

It localises to the cell inner membrane. It carries out the reaction GTP + H2O = GDP + phosphate + H(+). Required for accurate and efficient protein synthesis under certain stress conditions. May act as a fidelity factor of the translation reaction, by catalyzing a one-codon backward translocation of tRNAs on improperly translocated ribosomes. Back-translocation proceeds from a post-translocation (POST) complex to a pre-translocation (PRE) complex, thus giving elongation factor G a second chance to translocate the tRNAs correctly. Binds to ribosomes in a GTP-dependent manner. This Rhizobium leguminosarum bv. trifolii (strain WSM2304) protein is Elongation factor 4.